The primary structure comprises 362 residues: UDP-3-O-acylglucosamine N-acyltransferase (362 aa).

His251 acts as the Proton acceptor in catalysis.

It belongs to the transferase hexapeptide repeat family. LpxD subfamily. In terms of assembly, homotrimer.

The enzyme catalyses a UDP-3-O-[(3R)-3-hydroxyacyl]-alpha-D-glucosamine + a (3R)-hydroxyacyl-[ACP] = a UDP-2-N,3-O-bis[(3R)-3-hydroxyacyl]-alpha-D-glucosamine + holo-[ACP] + H(+). Its pathway is bacterial outer membrane biogenesis; LPS lipid A biosynthesis. Catalyzes the N-acylation of UDP-3-O-acylglucosamine using 3-hydroxyacyl-ACP as the acyl donor. Is involved in the biosynthesis of lipid A, a phosphorylated glycolipid that anchors the lipopolysaccharide to the outer membrane of the cell. The polypeptide is UDP-3-O-acylglucosamine N-acyltransferase (Cupriavidus pinatubonensis (strain JMP 134 / LMG 1197) (Cupriavidus necator (strain JMP 134))).